The primary structure comprises 198 residues: Sorcin (198 aa).

EF-hand domains follow at residues 45-64, 70-98, 100-135, and 151-169; these read QDGQ…SGIA, FNLE…FKEL, AVLN…MGFR, and SGKI…LRAL. Ca(2+) contacts are provided by D83, D85, S87, T89, E94, D113, D115, S117, T119, and E124. S178 is modified (phosphoserine).

In terms of assembly, homodimer. Interacts with GCA, RYR2 and ANXA7. In terms of tissue distribution, detected in cardiac myocytes.

Its subcellular location is the cytoplasm. The protein localises to the sarcoplasmic reticulum membrane. Functionally, calcium-binding protein that modulates excitation-contraction coupling in the heart. Contributes to calcium homeostasis in the heart sarcoplasmic reticulum. Modulates the activity of RYR2 calcium channels. The polypeptide is Sorcin (Sri) (Mus musculus (Mouse)).